Reading from the N-terminus, the 160-residue chain is Cytochrome b6-f complex subunit 4 (160 aa).

Helical transmembrane passes span leucine 36 to valine 56, leucine 95 to glutamate 115, and threonine 131 to isoleucine 151.

This sequence belongs to the cytochrome b family. PetD subfamily. As to quaternary structure, the 4 large subunits of the cytochrome b6-f complex are cytochrome b6, subunit IV (17 kDa polypeptide, petD), cytochrome f and the Rieske protein, while the 4 small subunits are petG, petL, petM and petN. The complex functions as a dimer.

The protein localises to the plastid. It is found in the chloroplast thylakoid membrane. Component of the cytochrome b6-f complex, which mediates electron transfer between photosystem II (PSII) and photosystem I (PSI), cyclic electron flow around PSI, and state transitions. The sequence is that of Cytochrome b6-f complex subunit 4 from Huperzia lucidula (Shining clubmoss).